The chain runs to 396 residues: S-adenosylmethionine decarboxylase proenzyme (396 aa).

Residues Glu-29 and Glu-32 contribute to the active site. Ser-88 functions as the Schiff-base intermediate with substrate; via pyruvic acid in the catalytic mechanism. Position 88 is a pyruvic acid (Ser); by autocatalysis (Ser-88). The active-site Proton donor; for catalytic activity is Cys-102. Catalysis depends on proton acceptor; for processing activity residues Ser-287 and His-301.

It belongs to the eukaryotic AdoMetDC family. Pyruvate is required as a cofactor. In terms of processing, is synthesized initially as an inactive proenzyme. Formation of the active enzyme involves a self-maturation process in which the active site pyruvoyl group is generated from an internal serine residue via an autocatalytic post-translational modification. Two non-identical subunits are generated from the proenzyme in this reaction, and the pyruvate is formed at the N-terminus of the alpha chain, which is derived from the carboxyl end of the proenzyme. The post-translation cleavage follows an unusual pathway, termed non-hydrolytic serinolysis, in which the side chain hydroxyl group of the serine supplies its oxygen atom to form the C-terminus of the beta chain, while the remainder of the serine residue undergoes an oxidative deamination to produce ammonia and the pyruvoyl group blocking the N-terminus of the alpha chain.

The catalysed reaction is S-adenosyl-L-methionine + H(+) = S-adenosyl 3-(methylsulfanyl)propylamine + CO2. It functions in the pathway amine and polyamine biosynthesis; S-adenosylmethioninamine biosynthesis; S-adenosylmethioninamine from S-adenosyl-L-methionine: step 1/1. Functionally, catalyzes the decarboxylation of S-adenosylmethionine, a key step in the biosynthetic pathway for spermidine and spermine. It is essential for normal growth, sporulation, and maintenance of ds-RNA virus. The protein is S-adenosylmethionine decarboxylase proenzyme (SPE2) of Saccharomyces cerevisiae (strain ATCC 204508 / S288c) (Baker's yeast).